A 477-amino-acid polypeptide reads, in one-letter code: UDP-N-acetylmuramate--L-alanine ligase (477 aa).

122-128 (GTHGKTT) is an ATP binding site.

Belongs to the MurCDEF family.

The protein resides in the cytoplasm. The enzyme catalyses UDP-N-acetyl-alpha-D-muramate + L-alanine + ATP = UDP-N-acetyl-alpha-D-muramoyl-L-alanine + ADP + phosphate + H(+). It functions in the pathway cell wall biogenesis; peptidoglycan biosynthesis. Functionally, cell wall formation. In Xanthomonas euvesicatoria pv. vesicatoria (strain 85-10) (Xanthomonas campestris pv. vesicatoria), this protein is UDP-N-acetylmuramate--L-alanine ligase.